A 428-amino-acid chain; its full sequence is Probable oxidoreductase OrdL (428 aa).

The chain is Probable oxidoreductase OrdL (ordL) from Rhizobium meliloti (strain 1021) (Ensifer meliloti).